Reading from the N-terminus, the 179-residue chain is Shikimate kinase (179 aa).

Residue 15–20 (GAGKTS) participates in ATP binding. Position 19 (Thr19) interacts with Mg(2+). Asp37, Arg61, and Gly83 together coordinate substrate. Arg123 is an ATP binding site. Arg142 is a binding site for substrate.

This sequence belongs to the shikimate kinase family. Monomer. It depends on Mg(2+) as a cofactor.

It is found in the cytoplasm. The catalysed reaction is shikimate + ATP = 3-phosphoshikimate + ADP + H(+). The protein operates within metabolic intermediate biosynthesis; chorismate biosynthesis; chorismate from D-erythrose 4-phosphate and phosphoenolpyruvate: step 5/7. In terms of biological role, catalyzes the specific phosphorylation of the 3-hydroxyl group of shikimic acid using ATP as a cosubstrate. In Coxiella burnetii (strain CbuG_Q212) (Coxiella burnetii (strain Q212)), this protein is Shikimate kinase.